A 391-amino-acid polypeptide reads, in one-letter code: Pepsin B (391 aa).

An N-terminal signal peptide occupies residues 1-16; sequence MKCLILALICLQLSEG. Positions 17 to 60 are cleaved as a propeptide — activation peptide; it reads LVVRQILHKGKSIRERMEENGVLEDFLRYNKKADPAAKFLFNKD. In terms of domain architecture, Peptidase A1 spans 75 to 388; the sequence is YFGEISIGTP…DMANNRVGFA (314 aa). D93 is a catalytic residue. Disulfide bonds link C106/C111 and C270/C274. The active site involves D279. A disulfide bridge connects residues C313 and C346.

The protein belongs to the peptidase A1 family.

The protein localises to the secreted. It carries out the reaction Degradation of gelatin, little activity on hemoglobin. Specificity on B chain of insulin more restricted than that of pepsin A. Does not cleave 1-Phe-|-Val-2, 4-Gln-|-His-5 or 23-Gly-|-Phe-24.. Its function is as follows. Hydrolyzes various peptides including beta-endorphin, insulin B chain, dynorphin A, and neurokinin A, with high specificity for the cleavage of the Phe-Xaa bonds. This chain is Pepsin B, found in Monodelphis domestica (Gray short-tailed opossum).